The primary structure comprises 481 residues: MSPETETGATSSVPRSLFDKVWDAHQVRAETAETPGLLYIDLHLVHEVTSPQAFSVLAERGLKVRRPDRTLATIDHATPTLDFAAGETPPYATAAAQNQVETLQSNTAQHGITLHGWGSGHRGVVHVIGPELGATQPGMTIVCGDSHTATHGAFGALAFGIGTTEVGHVLASQCLLQRKPKSMRVTVDGETAAGISAKDIILAIIAEIGVDGGTGCVIEYAGSAIEALDMEGRMTVCNMSIEAGARAGMIAPDETTFAWLEGREQVPTGSEWDAAIDRWRALRSDAGARFDHEVMIDAASIRPMVTWGTAPDTGIAVNAPIPQPRSPSHRKALAYMGLEAGMPVAGTQVDQVFIGSCTNSRITDLREAAAIMSGRRVADGIRALVVPGSVAVRAQAEAEGLDRIFTDAGAEWRQPGCSMCIAMNGDRGEPGQLVVSTSNRNFEGRQGPGVRTVLASPATAAAAAIAGHVIDPAELMEPAHA.

The [4Fe-4S] cluster site is built by cysteine 357, cysteine 417, and cysteine 420.

Belongs to the aconitase/IPM isomerase family. LeuC type 1 subfamily. In terms of assembly, heterodimer of LeuC and LeuD. [4Fe-4S] cluster serves as cofactor.

It catalyses the reaction (2R,3S)-3-isopropylmalate = (2S)-2-isopropylmalate. Its pathway is amino-acid biosynthesis; L-leucine biosynthesis; L-leucine from 3-methyl-2-oxobutanoate: step 2/4. Catalyzes the isomerization between 2-isopropylmalate and 3-isopropylmalate, via the formation of 2-isopropylmaleate. The chain is 3-isopropylmalate dehydratase large subunit from Maricaulis maris (strain MCS10) (Caulobacter maris).